The sequence spans 280 residues: Cell envelope integrity protein EipB (280 aa).

A signal peptide spans Met1 to Ala24. Residues Cys69 and Cys278 are joined by a disulfide bond.

In terms of assembly, monomer.

It localises to the periplasm. Functions in the periplasm to maintain cell envelope integrity. The polypeptide is Cell envelope integrity protein EipB (Brucella abortus (strain 2308)).